Reading from the N-terminus, the 396-residue chain is 8-amino-7-oxononanoate synthase (396 aa).

Substrate is bound at residue R19. Residue 106–107 (GY) participates in pyridoxal 5'-phosphate binding. H131 contributes to the substrate binding site. Positions 176, 204, and 233 each coordinate pyridoxal 5'-phosphate. An N6-(pyridoxal phosphate)lysine modification is found at K236. T350 contributes to the substrate binding site.

This sequence belongs to the class-II pyridoxal-phosphate-dependent aminotransferase family. BioF subfamily. As to quaternary structure, homodimer. Pyridoxal 5'-phosphate serves as cofactor.

It catalyses the reaction 6-carboxyhexanoyl-[ACP] + L-alanine + H(+) = (8S)-8-amino-7-oxononanoate + holo-[ACP] + CO2. Its pathway is cofactor biosynthesis; biotin biosynthesis. Its function is as follows. Catalyzes the decarboxylative condensation of pimeloyl-[acyl-carrier protein] and L-alanine to produce 8-amino-7-oxononanoate (AON), [acyl-carrier protein], and carbon dioxide. The protein is 8-amino-7-oxononanoate synthase of Pseudomonas savastanoi pv. phaseolicola (strain 1448A / Race 6) (Pseudomonas syringae pv. phaseolicola (strain 1448A / Race 6)).